The chain runs to 753 residues: 5-methyltetrahydropteroyltriglutamate--homocysteine methyltransferase (753 aa).

5-methyltetrahydropteroyltri-L-glutamate-binding positions include 17–20 (RELK) and lysine 117. L-homocysteine-binding positions include 431-433 (IGS) and glutamate 484. L-methionine is bound by residues 431-433 (IGS) and glutamate 484. 5-methyltetrahydropteroyltri-L-glutamate contacts are provided by residues 515 to 516 (RC) and tryptophan 561. Aspartate 599 is a binding site for L-homocysteine. Aspartate 599 serves as a coordination point for L-methionine. Glutamate 605 lines the 5-methyltetrahydropteroyltri-L-glutamate pocket. Residues histidine 641, cysteine 643, and glutamate 665 each contribute to the Zn(2+) site. The active-site Proton donor is the histidine 694. Cysteine 726 contacts Zn(2+).

This sequence belongs to the vitamin-B12 independent methionine synthase family. Requires Zn(2+) as cofactor.

The enzyme catalyses 5-methyltetrahydropteroyltri-L-glutamate + L-homocysteine = tetrahydropteroyltri-L-glutamate + L-methionine. It participates in amino-acid biosynthesis; L-methionine biosynthesis via de novo pathway; L-methionine from L-homocysteine (MetE route): step 1/1. Its function is as follows. Catalyzes the transfer of a methyl group from 5-methyltetrahydrofolate to homocysteine resulting in methionine formation. The chain is 5-methyltetrahydropteroyltriglutamate--homocysteine methyltransferase from Escherichia coli O157:H7.